A 238-amino-acid polypeptide reads, in one-letter code: Membrane protein 2 (238 aa).

Belongs to the varicellovirus ORF2 protein family. Phosphorylated by host.

Its subcellular location is the host membrane. The chain is Membrane protein 2 from Varicella-zoster virus (strain Dumas) (HHV-3).